The sequence spans 720 residues: Engulfment and cell motility protein 2 (720 aa).

At tyrosine 48 the chain carries Phosphotyrosine. The ELMO domain maps to 311 to 485 (AQRDIIFELR…VVREQITRAL (175 aa)). Residue serine 503 is modified to Phosphoserine. The PH domain maps to 553 to 674 (SSFRKIGNRR…LLGKDMSSEL (122 aa)). An SH3-binding motif is present at residues 700–707 (PEAPPPIP). At tyrosine 717 the chain carries Phosphotyrosine.

In terms of assembly, interacts with the SH3-domain of DOCK1 via its SH3-binding site. Probably part of a complex with DOCK1 and RAC1. Probably part of a complex with DOCK1 and CRK isoform CRK-II. Interacts with ARHGEF16, DOCK4 and EPHA2; mediates activation of RAC1 by EPHA2. Interacts with ADGRB3. Interacts with AUTS2; the interaction is direct. Widely expressed, with a higher expression in skeletal muscle, kidney and placenta.

The protein localises to the cytoplasm. It is found in the cytosol. Its subcellular location is the membrane. In terms of biological role, involved in cytoskeletal rearrangements required for phagocytosis of apoptotic cells and cell motility. Acts in association with DOCK1 and CRK. Was initially proposed to be required in complex with DOCK1 to activate Rac Rho small GTPases. May enhance the guanine nucleotide exchange factor (GEF) activity of DOCK1. The sequence is that of Engulfment and cell motility protein 2 (ELMO2) from Homo sapiens (Human).